The sequence spans 764 residues: 5-methyltetrahydropteroyltriglutamate--homocysteine methyltransferase (764 aa).

Residues 16-19 (RELK) and Lys121 contribute to the 5-methyltetrahydropteroyltri-L-glutamate site. Residues 440–442 (IGS) and Glu493 contribute to the L-homocysteine site. L-methionine contacts are provided by residues 440–442 (IGS) and Glu493. 5-methyltetrahydropteroyltri-L-glutamate is bound by residues 524 to 525 (RC) and Trp570. Asp608 contacts L-homocysteine. Asp608 contributes to the L-methionine binding site. Glu614 serves as a coordination point for 5-methyltetrahydropteroyltri-L-glutamate. Residues His650, Cys652, and Glu674 each contribute to the Zn(2+) site. Catalysis depends on His703, which acts as the Proton donor. Cys735 serves as a coordination point for Zn(2+).

It belongs to the vitamin-B12 independent methionine synthase family. Requires Zn(2+) as cofactor.

It catalyses the reaction 5-methyltetrahydropteroyltri-L-glutamate + L-homocysteine = tetrahydropteroyltri-L-glutamate + L-methionine. It functions in the pathway amino-acid biosynthesis; L-methionine biosynthesis via de novo pathway; L-methionine from L-homocysteine (MetE route): step 1/1. Catalyzes the transfer of a methyl group from 5-methyltetrahydrofolate to homocysteine resulting in methionine formation. In Burkholderia ambifaria (strain MC40-6), this protein is 5-methyltetrahydropteroyltriglutamate--homocysteine methyltransferase.